Consider the following 1148-residue polypeptide: Trafficking protein particle complex subunit 9 (1148 aa).

Ser-566 and Ser-953 each carry phosphoserine.

The protein belongs to the NIBP family. Component of the multisubunit TRAPP (transport protein particle) complex, which includes at least TRAPPC2, TRAPPC2L, TRAPPC3, TRAPPC3L, TRAPPC4, TRAPPC5, TRAPPC8, TRAPPC9, TRAPPC10, TRAPPC11 and TRAPPC12. Directly interacts with IKBKB and MAP3K14. In terms of tissue distribution, expressed in neurons of the pyramidal layer of the cortex, in spinal cord motor neurons and white matter neurons (at protein level).

Its subcellular location is the golgi apparatus. The protein resides in the cis-Golgi network. It localises to the endoplasmic reticulum. It is found in the cytoplasm. Its function is as follows. Functions as an activator of NF-kappa-B through increased phosphorylation of the IKK complex. May function in neuronal cells differentiation. May play a role in vesicular transport from endoplasmic reticulum to Golgi. The sequence is that of Trafficking protein particle complex subunit 9 (Trappc9) from Mus musculus (Mouse).